Consider the following 678-residue polypeptide: Glycine--tRNA ligase beta subunit (678 aa).

Belongs to the class-II aminoacyl-tRNA synthetase family. As to quaternary structure, tetramer of two alpha and two beta subunits.

The protein resides in the cytoplasm. It catalyses the reaction tRNA(Gly) + glycine + ATP = glycyl-tRNA(Gly) + AMP + diphosphate. This Streptococcus pneumoniae serotype 19F (strain G54) protein is Glycine--tRNA ligase beta subunit.